The primary structure comprises 513 residues: Bifunctional purine biosynthesis protein PurH (513 aa).

The region spanning 1–145 (MTKRALISVS…KNYQDVTAVV (145 aa)) is the MGS-like domain.

This sequence belongs to the PurH family.

The enzyme catalyses (6R)-10-formyltetrahydrofolate + 5-amino-1-(5-phospho-beta-D-ribosyl)imidazole-4-carboxamide = 5-formamido-1-(5-phospho-D-ribosyl)imidazole-4-carboxamide + (6S)-5,6,7,8-tetrahydrofolate. It carries out the reaction IMP + H2O = 5-formamido-1-(5-phospho-D-ribosyl)imidazole-4-carboxamide. It participates in purine metabolism; IMP biosynthesis via de novo pathway; 5-formamido-1-(5-phospho-D-ribosyl)imidazole-4-carboxamide from 5-amino-1-(5-phospho-D-ribosyl)imidazole-4-carboxamide (10-formyl THF route): step 1/1. The protein operates within purine metabolism; IMP biosynthesis via de novo pathway; IMP from 5-formamido-1-(5-phospho-D-ribosyl)imidazole-4-carboxamide: step 1/1. This Enterococcus faecalis (strain ATCC 700802 / V583) protein is Bifunctional purine biosynthesis protein PurH.